The following is a 395-amino-acid chain: Probable protein arginine N-methyltransferase 6.2 (395 aa).

Gly residues predominate over residues Met1–Gly11. The segment at Met1–Pro37 is disordered. In terms of domain architecture, SAM-dependent MTase PRMT-type spans Asp45–Lys390. S-adenosyl-L-methionine contacts are provided by His58, Arg67, Gly91, Asp113, and Glu142. Catalysis depends on residues Glu156 and Glu165. Residues Lys300 to Asp324 form a disordered region. A compositionally biased stretch (polar residues) spans Gln302–Ser317.

This sequence belongs to the class I-like SAM-binding methyltransferase superfamily. Protein arginine N-methyltransferase family. PRMT6 subfamily.

In terms of biological role, arginine methyltransferase that can both catalyze the formation of omega-N monomethylarginine (MMA) and asymmetrical dimethylarginine (aDMA). The sequence is that of Probable protein arginine N-methyltransferase 6.2 (PRMT6.2) from Oryza sativa subsp. indica (Rice).